The chain runs to 120 residues: MSRKLEALDRRKARVRRALRAAANGRPRLSVFRSSKQIYVQVIDDVAGKTLASASSIDKALKGELKTGADVAAATAVGKLVAERAKAAGVTKVIFDRSGYIYHGRVKAVAEAAREGGLEF.

The protein belongs to the universal ribosomal protein uL18 family. As to quaternary structure, part of the 50S ribosomal subunit; part of the 5S rRNA/L5/L18/L25 subcomplex. Contacts the 5S and 23S rRNAs.

In terms of biological role, this is one of the proteins that bind and probably mediate the attachment of the 5S RNA into the large ribosomal subunit, where it forms part of the central protuberance. This is Large ribosomal subunit protein uL18 from Methylobacterium radiotolerans (strain ATCC 27329 / DSM 1819 / JCM 2831 / NBRC 15690 / NCIMB 10815 / 0-1).